A 114-amino-acid chain; its full sequence is MSDDMALPLQFTDAAANKVKDLIADEENPNLRLRVYITGGGCSGFQYGFTFDDAMNEGDMTIEKQGVALVIDPMSLQYLVGGCVDYTEGLEGSRFIVTNPNAKSTCGCGSSFSI.

Cysteine 42, cysteine 106, and cysteine 108 together coordinate iron-sulfur cluster.

The protein belongs to the HesB/IscA family. As to quaternary structure, homodimer. Requires iron-sulfur cluster as cofactor.

Its function is as follows. Required for insertion of 4Fe-4S clusters for at least IspG. The polypeptide is Iron-sulfur cluster insertion protein ErpA (Proteus mirabilis (strain HI4320)).